The sequence spans 400 residues: MGFVLVPKSDFQIPLEADTIRPDLFEGLDLDEIRSLQVYEGNIKRPLGEFFEIAETSHEDQLIRIDGDVSRVKYIGSGMKSGKIIINGDVGLQLGCEMKGGEIEVNGNVSSWIGMEMHGGTIKINGNAGDYVGCAYRGEWRGMKGGKIIIQGNAGNNIGGGMMAGEIYIGGDAGNFCGIRMNGGEITVRGDAGRAPGAEMVSGIIKIHGRISSLLPGFKEISTFKEDGSLMILFKGDLSEKNPEGNLYINYNKNLHILENETDEGRVITKKGIKVIYNSGSTIREGQIIKGGNKLTDDYIDECARCCISPEDYKLLGEPENVVVSSHGNEVVLRAVEDPGIQMGTIFIPRGIWANVLTPPYTESTGSPMYKGVPVYLRKASQGERILSAEELVEEYGVGK.

7 repeat units span residues 76–88, 95–107, 114–126, 140–152, 159–171, 178–190, and 197–209. Residues 76-209 form a 7 X 13 AA repeats of [GW]-X-X-M-X-X-G-X-I-X-[IV]-X-G region; that stretch reads GSGMKSGKII…MVSGIIKIHG (134 aa).

In the N-terminal section; belongs to the FwdC/FmdC family. This sequence in the C-terminal section; belongs to the molybdenum dinucleotide binding protein family. As to quaternary structure, consists of five subunits; FmdA, FmdB, FmdC, FmdD, and FmdE.

It catalyses the reaction N-formylmethanofuran + 2 oxidized [2Fe-2S]-[ferredoxin] + H2O = methanofuran + 2 reduced [2Fe-2S]-[ferredoxin] + CO2 + H(+). It participates in one-carbon metabolism; methanogenesis from CO(2); 5,10-methenyl-5,6,7,8-tetrahydromethanopterin from CO(2): step 1/3. With respect to regulation, inactivated by cyanide. Its function is as follows. Catalyzes the reversible oxidation of CO(2) and methanofuran (MFR) to N-formylmethanofuran (CHO-MFR). Can only oxidize formylmethanofuran. This enzyme is oxygen-labile. This is Molybdenum-containing formylmethanofuran dehydrogenase 1 subunit C (fmdC) from Methanothermobacter marburgensis (strain ATCC BAA-927 / DSM 2133 / JCM 14651 / NBRC 100331 / OCM 82 / Marburg) (Methanobacterium thermoautotrophicum).